The following is a 310-amino-acid chain: Vomeronasal type-1 receptor 3 (310 aa).

At 1–5 the chain is on the extracellular side; that stretch reads MASKD. Residues 6 to 26 form a helical membrane-spanning segment; it reads FAIGMILSQIMVGFLGNFFLL. At 27–50 the chain is on the cytoplasmic side; that stretch reads YHYSFLHFTRGMLQSTDLTLKHLT. Residues 51–71 traverse the membrane as a helical segment; it reads IANSLVILSKGIPQTMAAFGL. The Extracellular portion of the chain corresponds to 72 to 91; it reads KDSLSDIGCKFVFYVHRVGR. Residues 92-112 traverse the membrane as a helical segment; the sequence is AVCTGNACLLSVFQVITISSS. Residues 113–129 are Cytoplasmic-facing; sequence EFRWAELKLHAHKYIRS. A helical transmembrane segment spans residues 130 to 150; it reads FILVLCWILNTLVNITVPLHV. The Extracellular portion of the chain corresponds to 151 to 186; sequence TGKWNSINSTKTNDYGYCSGGSRSRIPHSLHIVLLS. Residue N158 is glycosylated (N-linked (GlcNAc...) asparagine). Residues 187 to 207 form a helical membrane-spanning segment; it reads SLDVLCLGLMTLASGSMVFIL. The Cytoplasmic portion of the chain corresponds to 208–235; that stretch reads HRLKQQVQHIHGTNLSPRSSPESRVTQS. Residues 236–258 form a helical membrane-spanning segment; sequence ILVLVSTLCYFTRSPPSLHMSLF. Topologically, residues 259–263 are extracellular; the sequence is PNPSW. Residues 264–284 form a helical membrane-spanning segment; that stretch reads WPLNASALITACFPTVSPFVL. At 285–310 the chain is on the cytoplasmic side; it reads MSRHPRIPRLGSACCGRNPQFPKLVR.

This sequence belongs to the G-protein coupled receptor 1 family.

The protein localises to the cell membrane. Its function is as follows. Putative pheromone receptor. The chain is Vomeronasal type-1 receptor 3 (VN1R3) from Pan troglodytes (Chimpanzee).